The sequence spans 197 residues: Proteinase inhibitor type-2 (197 aa).

The signal sequence occupies residues 1 to 24 (MAVHKVSFVAHLLVLGMFLLLVDA). Repeat copies occupy residues 24–80 (AKAC…DPKN), 81–140 (PNVC…DEPK), and 141–196 (SCTT…PQSA). Disulfide bonds link Cys-27/Cys-115, Cys-31/Cys-111, Cys-39/Cys-121, Cys-51/Cys-88, Cys-54/Cys-72, Cys-55/Cys-84, Cys-61/Cys-97, and Cys-114/Cys-132.

The protein belongs to the protease inhibitor I20 (potato type II proteinase inhibitor) family.

In Nicotiana tabacum (Common tobacco), this protein is Proteinase inhibitor type-2.